The following is a 413-amino-acid chain: NAD-dependent dihydropyrimidine dehydrogenase subunit PreT (413 aa).

An NAD(+)-binding site is contributed by Glu-287.

Belongs to the NADH dehydrogenase family. As to quaternary structure, heterotetramer of 2 PreA and 2 PreT subunits.

The catalysed reaction is 5,6-dihydrouracil + NAD(+) = uracil + NADH + H(+). It carries out the reaction 5,6-dihydrothymine + NAD(+) = thymine + NADH + H(+). Involved in pyrimidine base degradation. Catalyzes physiologically the reduction of uracil to 5,6-dihydrouracil (DHU) by using NADH as a specific cosubstrate. It also catalyzes the reverse reaction and the reduction of thymine to 5,6-dihydrothymine (DHT). This chain is NAD-dependent dihydropyrimidine dehydrogenase subunit PreT (preT), found in Salmonella typhimurium (strain LT2 / SGSC1412 / ATCC 700720).